Consider the following 518-residue polypeptide: Probable malate:quinone oxidoreductase (518 aa).

Residues 495 to 518 are disordered; that stretch reads GAIPATTDGQSTAGTEHTPTAATV. Residues 501–518 are compositionally biased toward polar residues; it reads TDGQSTAGTEHTPTAATV.

It belongs to the MQO family. FAD serves as cofactor.

The catalysed reaction is (S)-malate + a quinone = a quinol + oxaloacetate. It participates in carbohydrate metabolism; tricarboxylic acid cycle; oxaloacetate from (S)-malate (quinone route): step 1/1. The sequence is that of Probable malate:quinone oxidoreductase from Mycolicibacterium gilvum (strain PYR-GCK) (Mycobacterium gilvum (strain PYR-GCK)).